Consider the following 272-residue polypeptide: Dermonecrotic toxin LvSicTox-alphaIC1bi (272 aa).

The active site involves His-5. Mg(2+) contacts are provided by Glu-25 and Asp-27. The active-site Nucleophile is His-41. 2 disulfide bridges follow: Cys-45-Cys-51 and Cys-47-Cys-189. Asp-84 contacts Mg(2+).

This sequence belongs to the arthropod phospholipase D family. Class II subfamily. Mg(2+) serves as cofactor. Expressed by the venom gland.

The protein localises to the secreted. It carries out the reaction an N-(acyl)-sphingosylphosphocholine = an N-(acyl)-sphingosyl-1,3-cyclic phosphate + choline. It catalyses the reaction an N-(acyl)-sphingosylphosphoethanolamine = an N-(acyl)-sphingosyl-1,3-cyclic phosphate + ethanolamine. The enzyme catalyses a 1-acyl-sn-glycero-3-phosphocholine = a 1-acyl-sn-glycero-2,3-cyclic phosphate + choline. The catalysed reaction is a 1-acyl-sn-glycero-3-phosphoethanolamine = a 1-acyl-sn-glycero-2,3-cyclic phosphate + ethanolamine. Dermonecrotic toxins cleave the phosphodiester linkage between the phosphate and headgroup of certain phospholipids (sphingolipid and lysolipid substrates), forming an alcohol (often choline) and a cyclic phosphate. This toxin acts on sphingomyelin (SM). It may also act on ceramide phosphoethanolamine (CPE), lysophosphatidylcholine (LPC) and lysophosphatidylethanolamine (LPE), but not on lysophosphatidylserine (LPS), and lysophosphatidylglycerol (LPG). It acts by transphosphatidylation, releasing exclusively cyclic phosphate products as second products. Induces dermonecrosis, hemolysis, increased vascular permeability, edema, inflammatory response, and platelet aggregation. This is Dermonecrotic toxin LvSicTox-alphaIC1bi from Loxosceles variegata (Recluse spider).